A 1427-amino-acid polypeptide reads, in one-letter code: ATP-binding cassette transporter abc1 (1427 aa).

The chain crosses the membrane as a helical span at residues 26–46; that stretch reads LLLFYLSLFSLTNLFLIQKLF. Asn-49 is a glycosylation site (N-linked (GlcNAc...) asparagine). 9 helical membrane-spanning segments follow: residues 63-83, 87-107, 115-135, 155-175, 197-217, 262-282, 298-318, 345-367, and 397-417; these read CLLE…SFYL, AVWW…NILS, LFSW…LISI, LLLP…PLFF, CSIF…WKSW, ILLM…TPLA, GNSP…ASVV, VLTS…YVYN, and MYFL…LAIL. One can recognise an ABC transmembrane type-1 1 domain in the interval 262–549; it reads ILLMVFLSVL…LASVSRQFIQ (288 aa). N-linked (GlcNAc...) asparagine glycosylation is present at Asn-437. The next 2 helical transmembrane spans lie at 489–509 and 513–533; these read IIFK…TFAI and IMGH…FGLL. N-linked (GlcNAc...) asparagine glycans are attached at residues Asn-567, Asn-581, and Asn-601. In terms of domain architecture, ABC transporter 1 spans 579–807; it reads FENTSLSWSP…PSTFFSSNTK (229 aa). The chain crosses the membrane as a helical span at residues 609-629; the sequence is FTLVVGSTGSGKSTLAMALLG. 614–621 lines the ATP pocket; that stretch reads GSTGSGKS. N-linked (GlcNAc...) asparagine glycans are attached at residues Asn-658 and Asn-703. Residues 760-780 traverse the membrane as a helical segment; sequence IILFTHNVSLCLPIAENVIVL. 2 N-linked (GlcNAc...) asparagine glycosylation sites follow: Asn-782 and Asn-842. The ABC transmembrane type-1 2 domain occupies 862 to 1142; the sequence is ILGSILLVMM…FVRANNEILT (281 aa). The next 3 membrane-spanning stretches (helical) occupy residues 866-886, 896-916, and 973-993; these read ILLV…IALW, LPSS…YFLM, and LLWA…ITML. An N-linked (GlcNAc...) asparagine glycan is attached at Asn-994. 3 helical membrane-spanning segments follow: residues 995–1015, 1086–1106, and 1114–1134; these read VTLV…LVYL, LAIR…LIAL, and GLVG…LVFV. N-linked (GlcNAc...) asparagine glycans are attached at residues Asn-1161 and Asn-1184. The region spanning 1180-1422 is the ABC transporter 2 domain; it reads VSIKNLTVSY…RRAFWKMCKE (243 aa). An ATP-binding site is contributed by 1214-1221; that stretch reads GRTGSGKS. The helical transmembrane segment at 1223–1243 threads the bilayer; that stretch reads MGLTLLRFTMIMSGAVEVDGI. Asn-1324 is a glycosylation site (N-linked (GlcNAc...) asparagine).

This sequence belongs to the ABC transporter superfamily. ABCC family. Conjugate transporter (TC 3.A.1.208) subfamily.

Its subcellular location is the membrane. The chain is ATP-binding cassette transporter abc1 (abc1) from Schizosaccharomyces pombe (strain 972 / ATCC 24843) (Fission yeast).